The chain runs to 190 residues: Endoribonuclease YbeY (190 aa).

Residues 1–20 are disordered; that stretch reads MDVENDRPPRRGAAGERNSG. Residues His-147, His-151, and His-157 each contribute to the Zn(2+) site.

The protein belongs to the endoribonuclease YbeY family. Requires Zn(2+) as cofactor.

The protein localises to the cytoplasm. Functionally, single strand-specific metallo-endoribonuclease involved in late-stage 70S ribosome quality control and in maturation of the 3' terminus of the 16S rRNA. The polypeptide is Endoribonuclease YbeY (Nitrobacter hamburgensis (strain DSM 10229 / NCIMB 13809 / X14)).